The primary structure comprises 488 residues: uncharacterized protein (488 aa).

Belongs to the IIV-6 467R family.

This is an uncharacterized protein from Invertebrate iridescent virus 3 (IIV-3).